The sequence spans 313 residues: tRNA dimethylallyltransferase (313 aa).

Residue 11 to 18 (GPTAGGKT) participates in ATP binding. 13-18 (TAGGKT) serves as a coordination point for substrate. Interaction with substrate tRNA regions lie at residues 36–39 (DSAL), 160–164 (QRIGR), and 243–248 (RCVGYR).

Belongs to the IPP transferase family. In terms of assembly, monomer. Mg(2+) is required as a cofactor.

The enzyme catalyses adenosine(37) in tRNA + dimethylallyl diphosphate = N(6)-dimethylallyladenosine(37) in tRNA + diphosphate. In terms of biological role, catalyzes the transfer of a dimethylallyl group onto the adenine at position 37 in tRNAs that read codons beginning with uridine, leading to the formation of N6-(dimethylallyl)adenosine (i(6)A). This chain is tRNA dimethylallyltransferase, found in Neisseria meningitidis serogroup B (strain ATCC BAA-335 / MC58).